Reading from the N-terminus, the 171-residue chain is ATP synthase subunit b (171 aa).

Residues 26-48 traverse the membrane as a helical segment; it reads LINLAIIIGLLVYAGRGFLGNLL.

It belongs to the ATPase B chain family. In terms of assembly, F-type ATPases have 2 components, F(1) - the catalytic core - and F(0) - the membrane proton channel. F(1) has five subunits: alpha(3), beta(3), gamma(1), delta(1), epsilon(1). F(0) has four main subunits: a(1), b(1), b'(1) and c(10-14). The alpha and beta chains form an alternating ring which encloses part of the gamma chain. F(1) is attached to F(0) by a central stalk formed by the gamma and epsilon chains, while a peripheral stalk is formed by the delta, b and b' chains.

The protein localises to the cellular thylakoid membrane. Its function is as follows. F(1)F(0) ATP synthase produces ATP from ADP in the presence of a proton or sodium gradient. F-type ATPases consist of two structural domains, F(1) containing the extramembraneous catalytic core and F(0) containing the membrane proton channel, linked together by a central stalk and a peripheral stalk. During catalysis, ATP synthesis in the catalytic domain of F(1) is coupled via a rotary mechanism of the central stalk subunits to proton translocation. Functionally, component of the F(0) channel, it forms part of the peripheral stalk, linking F(1) to F(0). This Synechococcus elongatus (strain ATCC 33912 / PCC 7942 / FACHB-805) (Anacystis nidulans R2) protein is ATP synthase subunit b.